Consider the following 446-residue polypeptide: Maturase K (446 aa).

Belongs to the intron maturase 2 family. MatK subfamily.

The protein resides in the plastid. Its subcellular location is the chloroplast. Functionally, usually encoded in the trnK tRNA gene intron. Probably assists in splicing its own and other chloroplast group II introns. The polypeptide is Maturase K (Phalaenopsis aphrodite subsp. formosana (Moth orchid)).